A 351-amino-acid chain; its full sequence is MVTKESIISDLEKENVGPEFGEFLNSLQTDLNSEKPLIEQVKSQLETHFNLGPETQEFSRKNDNAPVDQLLTNYYNNYEVNVLEFVLQMGFCKDLSIPLNVWFVLDMISQLSTSKQDLPLDYYLVLNNSHTGKYSDFVRYLIYEAVGAEIHCFEQGDMPQQYRSSRWEDKVKGPALANRGPIRGNVGAGDRKITFHLLCKKTARMILVGDDRETDFEMSDRSFVTLLLDYYQRVGTTKKIDLLLLTNNYDTNMNNKLQQLKILESLNMLKSNCYVLDYQITADQVTANFNSYVEGIPAFRRHEIANFLKKRRTPKNADELIFKYVGRWNICYQKKFHQGNISIHQISGYLD.

As to quaternary structure, heterododecamer of 4 alpha, 4 beta and 4 gamma chains. The gamma chain bridges the N-terminal halves of the alpha and beta subunits.

Its subcellular location is the cytoplasm. It functions in the pathway carbohydrate degradation; glycolysis; D-glyceraldehyde 3-phosphate and glycerone phosphate from D-glucose: step 3/4. Functionally, structural subunit of pyrophosphate--fructose 6-phosphate 1-phosphotransferase. Not required for catalytic activity. Fine-tunes allosteric regulation of the ATP-PFK by ATP, fructose 2,6-bisphosphate and AMP. This is ATP-dependent 6-phosphofructokinase subunit gamma (PFK3) from Komagataella phaffii (strain GS115 / ATCC 20864) (Yeast).